The chain runs to 172 residues: Disulfide bond formation protein B (172 aa).

Over 1–13 the chain is Cytoplasmic; the sequence is MIIRLAGMSVRQG. The chain crosses the membrane as a helical span at residues 14-30; that stretch reads CLLGLLMCALMMGVALV. At 31–48 the chain is on the periplasmic side; that stretch reads LQYVYGLTPCPLCIGQRI. Cys40 and Cys43 are oxidised to a cystine. Residues 49–65 form a helical membrane-spanning segment; the sequence is AVLLAAFVFAIGALHNP. The Cytoplasmic portion of the chain corresponds to 66–72; it reads AGNLGRG. Residues 73-90 traverse the membrane as a helical segment; that stretch reads LYAGLAALASVLGLAVAA. Topologically, residues 91 to 147 are periplasmic; it reads RHVWLQSLPPENVPSCGPGLDYMMEVLPLWDVLSRVLAGSGECAEIHGSLLGMSIPQ. Cys106 and Cys133 are disulfide-bonded. The chain crosses the membrane as a helical span at residues 148 to 166; the sequence is WTLLGFAVLLLIPLGMLAG. The Cytoplasmic segment spans residues 167–172; the sequence is IVIRRR.

This sequence belongs to the DsbB family.

It localises to the cell inner membrane. Its function is as follows. Required for disulfide bond formation in some periplasmic proteins. Acts by oxidizing the DsbA protein. This Chromohalobacter salexigens (strain ATCC BAA-138 / DSM 3043 / CIP 106854 / NCIMB 13768 / 1H11) protein is Disulfide bond formation protein B.